We begin with the raw amino-acid sequence, 151 residues long: Ribosome maturation factor RimP (151 aa).

The protein belongs to the RimP family.

It is found in the cytoplasm. In terms of biological role, required for maturation of 30S ribosomal subunits. The sequence is that of Ribosome maturation factor RimP from Shewanella sp. (strain ANA-3).